A 587-amino-acid polypeptide reads, in one-letter code: Laccase abr2 (587 aa).

The first 17 residues, 1–17 (MWYQSASLLGVAAVAQA), serve as a signal peptide directing secretion. Plastocyanin-like domains lie at 41–137 (IFVN…VHIR) and 168–350 (LVML…ANDG). N-linked (GlcNAc...) asparagine glycosylation is present at N71. 4 residues coordinate Cu cation: H75, H77, H119, and H121. N-linked (GlcNAc...) asparagine glycans are attached at residues N228, N383, N420, and N462. A Plastocyanin-like 3 domain is found at 397-577 (PPYPAISPAS…ILMDGVDVWP (181 aa)). H487 lines the Cu cation pocket. Residue N504 is glycosylated (N-linked (GlcNAc...) asparagine).

Belongs to the multicopper oxidase family.

It is found in the cell surface. Its pathway is pigment biosynthesis; melanin biosynthesis. In terms of biological role, laccase; part of the gene cluster that mediates the biosynthesis of dihydroxynaphthalene (DHN)-melanin, a bluish-green pigment and a structural component of the conidial wall. The first step of the pathway is the production of the heptaketide naphtopyrone YWA1 by the polyketide synthase alb1 though condensation of acetyl-CoA with malonyl-CoA. The naphtopyrone YWA1 is then converted to the pentaketide 1,3,6,8-tetrahydroxynaphthalene (1,3,6,8-THN) by the heptaketide hydrolyase ayg1 though chain-length shortening. 1,3,6,8-THN is substrate of the hydroxynaphthalene reductase arp2 to yield scytalone. The scytalone dehydratase arp1 then reduces scytalone to 1,3,8-THN. 1,3,8-THN is also substrate of the hydroxynaphthalene reductase arp2 to yield vermelone. Vermelone is further converted by the multicopper oxidase abr1 to 1,8-DHN. Finally the laccase abr2 transforms 1,8-DHN to DHN-melanin. DHN-melanin biosynthesis appears to be initiated in endosomes where early enzymes (abl1, ayg1, arp1 and arp2) localize, with exocytosis leading to melanin deposition on the cell surface where late enzymes (abr1 and abr2) localize. DHN-melanin is an important structural component of the outer cell wall and is required for the presence of conidial surface hydrophobins. DHN-melanin also plays a crucial role in fungal virulence, including a protective role against the host's immune defenses. DHN-melanin also protects conidia against amoeba predation. This is Laccase abr2 from Aspergillus fumigatus (strain ATCC MYA-4609 / CBS 101355 / FGSC A1100 / Af293) (Neosartorya fumigata).